We begin with the raw amino-acid sequence, 352 residues long: Peptide chain release factor 1 (352 aa).

Position 233 is an N5-methylglutamine (Gln233). The segment at 288-309 (NAKDRKEQVGSGDRSERIRTYN) is disordered. Residues 289 to 306 (AKDRKEQVGSGDRSERIR) show a composition bias toward basic and acidic residues.

Belongs to the prokaryotic/mitochondrial release factor family. In terms of processing, methylated by PrmC. Methylation increases the termination efficiency of RF1.

Its subcellular location is the cytoplasm. Its function is as follows. Peptide chain release factor 1 directs the termination of translation in response to the peptide chain termination codons UAG and UAA. The protein is Peptide chain release factor 1 of Helicobacter pylori (strain G27).